The sequence spans 131 residues: Urease subunit beta (131 aa).

Residues 100–131 (PLDPAAGVTSDEDAASAVVPRGAETSEREARA) form a disordered region.

This sequence belongs to the urease beta subunit family. Heterotrimer of UreA (gamma), UreB (beta) and UreC (alpha) subunits. Three heterotrimers associate to form the active enzyme.

It localises to the cytoplasm. It catalyses the reaction urea + 2 H2O + H(+) = hydrogencarbonate + 2 NH4(+). The protein operates within nitrogen metabolism; urea degradation; CO(2) and NH(3) from urea (urease route): step 1/1. The sequence is that of Urease subunit beta from Kocuria rhizophila (strain ATCC 9341 / DSM 348 / NBRC 103217 / DC2201).